We begin with the raw amino-acid sequence, 323 residues long: Cobalamin biosynthesis protein CobD (323 aa).

Helical transmembrane passes span 52-72 (IAGVLLLALTVTSAASVTWLM), 73-93 (VWGSARLHALAGLMVAALLSS), 154-174 (DGIIAPLFWLALGGPVAGMAF), 214-234 (ALLMVMVAPLIGLSQANAASI), and 294-314 (IRLMYATTLAMAVISLATAAL).

Belongs to the CobD/CbiB family.

The protein resides in the cell membrane. It participates in cofactor biosynthesis; adenosylcobalamin biosynthesis. Its function is as follows. Converts cobyric acid to cobinamide by the addition of aminopropanol on the F carboxylic group. In Pelobacter propionicus (strain DSM 2379 / NBRC 103807 / OttBd1), this protein is Cobalamin biosynthesis protein CobD.